Reading from the N-terminus, the 465-residue chain is GTPase Der (465 aa).

EngA-type G domains are found at residues 3–166 (FLVA…LNEY) and 184–358 (IHFS…ACAN). Residues 9–16 (GRANVGKS), 56–60 (DTGGI), 118–121 (NKVD), 190–197 (GRPNVGKS), 237–241 (DTAGV), and 302–305 (NKWD) contribute to the GTP site. The KH-like domain maps to 359–443 (KKITTADATR…PIVFEFKQSE (85 aa)). The interval 446-465 (FADRKNKRSKDEGSKSKKVK) is disordered.

This sequence belongs to the TRAFAC class TrmE-Era-EngA-EngB-Septin-like GTPase superfamily. EngA (Der) GTPase family. In terms of assembly, associates with the 50S ribosomal subunit.

Its function is as follows. GTPase that plays an essential role in the late steps of ribosome biogenesis. This is GTPase Der from Francisella tularensis subsp. tularensis (strain WY96-3418).